Reading from the N-terminus, the 161-residue chain is Cytochrome c-type biogenesis protein CcmE (161 aa).

Residues 1-8 (MNPRRKKR) are Cytoplasmic-facing. The chain crosses the membrane as a helical; Signal-anchor for type II membrane protein span at residues 9 to 29 (LTLAVALVFGLGATIGLMLYA). The Periplasmic portion of the chain corresponds to 30–161 (LSQNMDLFYT…SDEQKQGRVQ (132 aa)). Positions 129 and 133 each coordinate heme.

It belongs to the CcmE/CycJ family.

The protein localises to the cell inner membrane. Heme chaperone required for the biogenesis of c-type cytochromes. Transiently binds heme delivered by CcmC and transfers the heme to apo-cytochromes in a process facilitated by CcmF and CcmH. The protein is Cytochrome c-type biogenesis protein CcmE of Photobacterium profundum (strain SS9).